Here is a 367-residue protein sequence, read N- to C-terminus: Di-N-acetylchitobiase (367 aa).

An N-terminal signal peptide occupies residues 1-23 (MALSDLLELTLLLLLPLLERLSA). Positions 24–367 (EDCPCSEASL…EMWGALRPRL (344 aa)) constitute a GH18 domain. The active-site Proton donor is the Glu128. 4 N-linked (GlcNAc...) asparagine glycosylation sites follow: Asn178, Asn213, Asn247, and Asn284.

This sequence belongs to the glycosyl hydrolase 18 family.

It is found in the lysosome. Involved in the degradation of asparagine-linked glycoproteins. Hydrolyze of N-acetyl-beta-D-glucosamine (1-4)N-acetylglucosamine chitobiose core from the reducing end of the bond, it requires prior cleavage by glycosylasparaginase. The sequence is that of Di-N-acetylchitobiase (Ctbs) from Rattus norvegicus (Rat).